We begin with the raw amino-acid sequence, 334 residues long: Leucine-rich repeat-containing protein 26 (334 aa).

A signal peptide spans 1–26 (MRGPSWSRPRPLLLLLLLLSPWPVWA). Residues 27–261 (QVSATASPSG…HCAQPLALRD (235 aa)) are Extracellular-facing. The LRRNT domain maps to 34-71 (PSGSLGAPDCPEVCTCVPGGLASCSALSLPAVPPGLSL). 2 cysteine pairs are disulfide-bonded: C43–C49 and C47–C57. LRR repeat units lie at residues 72-93 (RLRALLLDHNRVRALPPGAFAG), 96-117 (ALQRLDLRENGLHSVHVRAFWG), 120-141 (ALQLLDLSANQLEALAPGTFAP), 144-167 (ALRNLSLAGNRLARLEPAALGALP), and 168-190 (LLRSLSLQDNELAALAPGLLGRL). The N-linked (GlcNAc...) asparagine glycan is linked to N147. Residues 201–255 (NPWGCGCALRPLCAWLRRHPLPASEAETVLCVWPGRLTLSPLTAFSDAAFSHCAQ) enclose the LRRCT domain. Disulfide bonds link C205–C231 and C207–C253. A helical membrane pass occupies residues 262–282 (LAVVYTLGPASFLVSLASCLA). The Cytoplasmic portion of the chain corresponds to 283–334 (LGSGLTACRARRRRLRTAALRPPRPPDPNPDPDPHGCASPADPGSPAAAAQA). The disordered stretch occupies residues 298–334 (RTAALRPPRPPDPNPDPDPHGCASPADPGSPAAAAQA). Positions 304–313 (PPRPPDPNPD) are enriched in pro residues. Over residues 320-334 (ASPADPGSPAAAAQA) the composition is skewed to low complexity.

As to quaternary structure, interacts with KCNMA1. As to expression, isoform 1 is expressed highly in normal prostate and salivary gland, very weakly in colon, pancreas, and intestine, and not at all in other tissues. Isoform 1 is expressed highly in many cancer cell lines and in breast cancer, pancreatic cancer and colon cancer. Isoform 2 is expressed in cancer cell lines.

The protein resides in the cell membrane. The protein localises to the cytoplasm. It is found in the cytoskeleton. In terms of biological role, auxiliary protein of the large-conductance, voltage and calcium-activated potassium channel (BK alpha). Required for the conversion of BK alpha channels from a high-voltage to a low-voltage activated channel type in non-excitable cells. These are characterized by negative membrane voltages and constant low levels of calcium. The protein is Leucine-rich repeat-containing protein 26 (LRRC26) of Homo sapiens (Human).